Reading from the N-terminus, the 250-residue chain is Probable transcriptional regulatory protein ROP_68700 (250 aa).

The protein belongs to the TACO1 family.

Its subcellular location is the cytoplasm. This is Probable transcriptional regulatory protein ROP_68700 from Rhodococcus opacus (strain B4).